A 389-amino-acid polypeptide reads, in one-letter code: Glutamate 5-kinase (389 aa).

Lys-16 provides a ligand contact to ATP. Ser-56, Asp-143, and Asn-155 together coordinate substrate. 175–176 (SD) serves as a coordination point for ATP. Residues 281–358 (AGELHVDEGA…AEIEAILGYA (78 aa)) enclose the PUA domain.

It belongs to the glutamate 5-kinase family.

The protein resides in the cytoplasm. The catalysed reaction is L-glutamate + ATP = L-glutamyl 5-phosphate + ADP. The protein operates within amino-acid biosynthesis; L-proline biosynthesis; L-glutamate 5-semialdehyde from L-glutamate: step 1/2. In terms of biological role, catalyzes the transfer of a phosphate group to glutamate to form L-glutamate 5-phosphate. The polypeptide is Glutamate 5-kinase (Rhizobium rhizogenes (strain K84 / ATCC BAA-868) (Agrobacterium radiobacter)).